Reading from the N-terminus, the 2542-residue chain is Unconventional myosin-IXa (2542 aa).

A Ras-associating domain is found at 14 to 112; it reads NEHTLRIYPG…YRFLLREKNL (99 aa). Residues 146-1017 form the Myosin motor domain; sequence KDFDDLCSLP…ERQHLQDLLH (872 aa). A helical transmembrane segment spans residues 175 to 195; it reads IYTYVGSILIAINPFKFLPIY. An ATP-binding site is contributed by 239-246; the sequence is GESGSGKT. The residue at position 755 (Ser-755) is a Phosphoserine. The interval 908–919 is actin-binding; it reads QAEPYFVKCIRS. 5 IQ domains span residues 1021–1041, 1043–1072, 1075–1104, 1116–1145, and 1139–1168; these read LRRI…QQFL, LRQA…EKDA, MASA…AAVI, RHKA…KIIL, and QRNK…EKLR. The neck or regulatory domain stretch occupies residues 1022-1163; sequence RRIVLLQRWF…RARQRCNALK (142 aa). The segment at 1164–2505 is tail; the sequence is EEKLREAKLE…LKNVKNSPQK (1342 aa). Residues 1221–1240 are compositionally biased toward basic and acidic residues; sequence RESSMDFSKESPDKQQERGR. The tract at residues 1221–1276 is disordered; the sequence is RESSMDFSKESPDKQQERGRRQSGTDLQEDVIVRQRPKSLEDLHQKKVGRAKRESR. At Ser-1243 the chain carries Phosphoserine. The residue at position 1245 (Thr-1245) is a Phosphothreonine. Residue Ser-1259 is modified to Phosphoserine. The stretch at 1265–1292 forms a coiled coil; that stretch reads QKKVGRAKRESRRMRELEQAIFSLELLK. Residues 1266–1276 show a composition bias toward basic residues; that stretch reads KKVGRAKRESR. Ser-1300 and Ser-1318 each carry phosphoserine. Residues 1342-1401 form a disordered region; the sequence is KSKPESLILDEGELKISSPNTFTNPKSQDNALSASSETSSTLAGKGASSDSEHLKNGTAK. Over residues 1358 to 1371 the composition is skewed to polar residues; it reads SSPNTFTNPKSQDN. Over residues 1372–1384 the composition is skewed to low complexity; the sequence is ALSASSETSSTLA. Basic and acidic residues predominate over residues 1391-1401; that stretch reads DSEHLKNGTAK. Positions 1492 to 1539 form a coiled coil; that stretch reads TVLKKLEKLNIEKEKRQKQLQQQNEKEMMEQIRQQTDILEKERKAFKT. Disordered regions lie at residues 1650-1675, 1693-1727, 1767-1793, and 1806-1841; these read RSTE…REGS, SGNP…SVDE, GKQG…PGPD, and QYHP…KRGV. Basic and acidic residues predominate over residues 1665–1675; sequence HRSDDPSREGS. Over residues 1715–1726 the composition is skewed to polar residues; it reads QQETSQRFSSVD. A compositionally biased stretch (basic and acidic residues) spans 1821–1833; sequence CRKEFKENKEPSP. Ser-1950 carries the post-translational modification Phosphoserine. 2 Phorbol-ester/DAG-type zinc fingers span residues 2001 to 2050 and 2068 to 2119; these read GHIF…TAKC and SRLT…DTDA. Residues 2065-2253 enclose the Rho-GAP domain; sequence VELSRLTSED…LIVVEQMNKY (189 aa). A phosphoserine mark is found at Ser-2293 and Ser-2296. Residues 2324–2360 are a coiled coil; that stretch reads TDQQQAAMQQEEKVLTEQIENLQKEKEELTFEMLVLE. The tract at residues 2361–2443 is disordered; sequence PRASDDETLE…NTTSSHGTRK (83 aa). Over residues 2377 to 2386 the composition is skewed to polar residues; it reads TADSSENLNM. Residues 2420–2438 show a composition bias toward low complexity; sequence SLDSVSSSVSSCLSNTTSS. A Phosphoserine modification is found at Ser-2458. A disordered region spans residues 2465–2530; the sequence is TEGPLGQAKS…TVDSDCSSTQ (66 aa).

It belongs to the TRAFAC class myosin-kinesin ATPase superfamily. Myosin family. Phosphorylated by ALPK1 following monosodium urate monohydrate (MSU)-induced inflammation. Expressed in the eye, lung, liver, brain, heart, kidney, skeletal muscle and spleen. No detection was found in liver. In the brain, expressed in the ependymal cells of the third ventricle and the aqueduct.

It is found in the membrane. The protein localises to the cytoplasm. The protein resides in the synapse. It localises to the cell projection. Its subcellular location is the growth cone. Functionally, myosins are actin-based motor molecules with ATPase activity. Unconventional myosins serve in intracellular movements. Regulates Rho by stimulating it's GTPase activity in neurons. Required for the regulation of neurite branching and motor neuron axon guidance. In Mus musculus (Mouse), this protein is Unconventional myosin-IXa (Myo9a).